The following is a 72-amino-acid chain: MKCYLVVVVAALCTLVAQGSVGAPIPKPNPIEDIYASQLPDPGTTAQMAAGDSAYPLTLLASFDPNDTSALH.

The signal sequence occupies residues 1-22 (MKCYLVVVVAALCTLVAQGSVG). N-linked (GlcNAc...) asparagine glycosylation is present at Asn66.

This sequence belongs to the lep1 family. Interacts at the cell wall with secreted rep1 repellent peptides.

It is found in the secreted. The protein resides in the cell wall. Core effector contributing to spore formation and tumor formation at the host plant. Modulates surface hydrophobicity promoting cell-cell or cell-surface contacts. Lep1 and rep1 interact in aerial hyphae to form a strong hydrophobic layer. Plays a crucial role in hyphal aggregation that might be a prerequisite for strong proliferation of diploid cells and for induction of the morphological changes associated with spore formation. In Sporisorium reilianum (strain SRZ2) (Maize head smut fungus), this protein is Late effector protein 1.